We begin with the raw amino-acid sequence, 697 residues long: ATP-dependent zinc metalloprotease FtsH (697 aa).

The tract at residues 1–23 is disordered; that stretch reads MSQNERDSLELERKNTPPDGPRL. Topologically, residues 1 to 29 are cytoplasmic; it reads MSQNERDSLELERKNTPPDGPRLPERRPR. Residues 30–50 form a helical membrane-spanning segment; sequence FSVWIYLAIFLALLVHFFLFW. Residues 51-158 lie on the Periplasmic side of the membrane; the sequence is TGTDTSTIEY…QFTARIEENW (108 aa). The helical transmembrane segment at 159-179 threads the bilayer; the sequence is FGGLLTWIFPLILIVALWVFL. Topologically, residues 180 to 697 are cytoplasmic; sequence LRRMSPSSQV…TERPESSSAP (518 aa). 251 to 258 serves as a coordination point for ATP; it reads GPPGTGKT. His474 is a Zn(2+) binding site. Glu475 is a catalytic residue. Residues His478 and Asp550 each contribute to the Zn(2+) site. The tract at residues 649–697 is disordered; that stretch reads GPRPYGDYPSPNGKDVEELKDLQKGEPTSSSAVEAPAPQTERPESSSAP. Residues 662-672 are compositionally biased toward basic and acidic residues; that stretch reads KDVEELKDLQK.

It in the central section; belongs to the AAA ATPase family. The protein in the C-terminal section; belongs to the peptidase M41 family. As to quaternary structure, homohexamer. Zn(2+) serves as cofactor.

The protein localises to the cell inner membrane. Its function is as follows. Acts as a processive, ATP-dependent zinc metallopeptidase for both cytoplasmic and membrane proteins. Plays a role in the quality control of integral membrane proteins. This chain is ATP-dependent zinc metalloprotease FtsH, found in Rhodothermus marinus (strain ATCC 43812 / DSM 4252 / R-10) (Rhodothermus obamensis).